A 282-amino-acid polypeptide reads, in one-letter code: Pantothenate synthetase (282 aa).

Position 30 to 37 (30 to 37 (MGNLHDGH)) interacts with ATP. Histidine 37 serves as the catalytic Proton donor. Glutamine 61 is a (R)-pantoate binding site. Glutamine 61 contacts beta-alanine. 149-152 (GNKD) is an ATP binding site. Glutamine 155 contributes to the (R)-pantoate binding site. Residues alanine 178 and 186-189 (MSSR) each bind ATP.

It belongs to the pantothenate synthetase family. In terms of assembly, homodimer.

It localises to the cytoplasm. It carries out the reaction (R)-pantoate + beta-alanine + ATP = (R)-pantothenate + AMP + diphosphate + H(+). Its pathway is cofactor biosynthesis; (R)-pantothenate biosynthesis; (R)-pantothenate from (R)-pantoate and beta-alanine: step 1/1. Functionally, catalyzes the condensation of pantoate with beta-alanine in an ATP-dependent reaction via a pantoyl-adenylate intermediate. The protein is Pantothenate synthetase of Marinomonas sp. (strain MWYL1).